The sequence spans 609 residues: Glutamine--fructose-6-phosphate aminotransferase [isomerizing] (609 aa).

Cys-2 serves as the catalytic Nucleophile; for GATase activity. In terms of domain architecture, Glutamine amidotransferase type-2 spans 2–218; the sequence is CGIVGAIAQR…EGDIAEITRR (217 aa). SIS domains follow at residues 286 to 426 and 458 to 599; these read ADEL…LKGL and LAED…VDQP. Lys-604 functions as the For Fru-6P isomerization activity in the catalytic mechanism.

As to quaternary structure, homodimer.

The protein resides in the cytoplasm. The catalysed reaction is D-fructose 6-phosphate + L-glutamine = D-glucosamine 6-phosphate + L-glutamate. Catalyzes the first step in hexosamine metabolism, converting fructose-6P into glucosamine-6P using glutamine as a nitrogen source. This is Glutamine--fructose-6-phosphate aminotransferase [isomerizing] from Salmonella typhimurium (strain LT2 / SGSC1412 / ATCC 700720).